Consider the following 904-residue polypeptide: Pentatricopeptide repeat-containing protein At4g30825, chloroplastic (904 aa).

Residues 1 to 61 constitute a chloroplast transit peptide; it reads MGSLRFSIPL…SSTRVLDKIR (61 aa). The segment at 75 to 94 is disordered; that stretch reads NSASAAPVERSRSSKLSGDQ. 20 PPR repeats span residues 173–203, 209–243, 244–274, 278–312, 313–347, 348–382, 383–417, 418–452, 487–521, 522–553, 557–591, 592–622, 628–662, 663–697, 698–732, 733–766, 767–801, 802–836, 837–871, and 872–904; these read NFVA…LCGF, SYQV…GVRP, NVAT…MRKF, CESA…RVRL, KLEN…GFSP, NIIA…GLEP, DETS…GYKP, NSFN…GCQY, NQTS…DSAF, ESHL…MESD, NLHI…GVVL, DRIG…MDEQ, DVYL…GIHW, NQEM…GFTP, NTVT…GVVD, VISY…GFSV, SLEA…TSGP, DHYT…GLGP, DLCS…NIIP, and DKVT…QMGI.

This sequence belongs to the PPR family. P subfamily.

Its subcellular location is the plastid. It is found in the chloroplast. The polypeptide is Pentatricopeptide repeat-containing protein At4g30825, chloroplastic (Arabidopsis thaliana (Mouse-ear cress)).